We begin with the raw amino-acid sequence, 555 residues long: Glutamine--tRNA ligase (555 aa).

Residues 34–44 (PEPNGYLHIGH) carry the 'HIGH' region motif. ATP contacts are provided by residues 35-37 (EPN) and 41-47 (HIGHAKS). Asp67 and Tyr212 together coordinate L-glutamine. Residues Thr231, 261–262 (RL), and 269–271 (MSK) each bind ATP. Positions 268–272 (IMSKR) match the 'KMSKS' region motif.

It belongs to the class-I aminoacyl-tRNA synthetase family. As to quaternary structure, monomer.

Its subcellular location is the cytoplasm. The catalysed reaction is tRNA(Gln) + L-glutamine + ATP = L-glutaminyl-tRNA(Gln) + AMP + diphosphate. This chain is Glutamine--tRNA ligase, found in Erwinia tasmaniensis (strain DSM 17950 / CFBP 7177 / CIP 109463 / NCPPB 4357 / Et1/99).